The sequence spans 262 residues: Small ribosomal subunit protein eS4A (262 aa).

The S4 RNA-binding domain occupies 42 to 105; the sequence is LPLIVFLRNR…GEHFRLVYDI (64 aa).

This sequence belongs to the eukaryotic ribosomal protein eS4 family. In terms of assembly, component of the small ribosomal subunit (SSU). Mature yeast ribosomes consist of a small (40S) and a large (60S) subunit. The 40S small subunit contains 1 molecule of ribosomal RNA (18S rRNA) and at least 33 different proteins. The large 60S subunit contains 3 rRNA molecules (25S, 5.8S and 5S rRNA) and at least 46 different proteins.

It is found in the cytoplasm. Component of the ribosome, a large ribonucleoprotein complex responsible for the synthesis of proteins in the cell. The small ribosomal subunit (SSU) binds messenger RNAs (mRNAs) and translates the encoded message by selecting cognate aminoacyl-transfer RNA (tRNA) molecules. The large subunit (LSU) contains the ribosomal catalytic site termed the peptidyl transferase center (PTC), which catalyzes the formation of peptide bonds, thereby polymerizing the amino acids delivered by tRNAs into a polypeptide chain. The nascent polypeptides leave the ribosome through a tunnel in the LSU and interact with protein factors that function in enzymatic processing, targeting, and the membrane insertion of nascent chains at the exit of the ribosomal tunnel. The sequence is that of Small ribosomal subunit protein eS4A (rps401) from Schizosaccharomyces pombe (strain 972 / ATCC 24843) (Fission yeast).